Reading from the N-terminus, the 695-residue chain is Pentatricopeptide repeat-containing protein 1, mitochondrial (695 aa).

6 PPR repeats span residues 133–169 (TQYWYFFQCKRLIKEGKLAEALDLFERQMLKEERLQP), 170–204 (LECNYTVLIGGCGRVGYLKKAFRLFNDMKKRDLEP), 205–243 (SDATYTALFNVCAESPWKDSALQSALKLRQQLQARNFQL), 244–278 (NLKTYHALLKVAAKCADLRLCLDVFKEIIQRGHAV), 279–315 (TEETFCFLLVGCIQDKKTGFRQAMQVWRQMLSLGIKP), and 316–352 (SRHGYNLLLEAARDCGLGDPEVASRLLLTSQEETILL). Residues 391 to 416 (QKLEGPPALPEARVTSRTQPEVETTA) form a disordered region. 4 PPR repeats span residues 470-485 (EGFLGKMTEHGLQPDI), 517-551 (DVTFFNTLIRKKSKLGDLEGAKALLPILAKKGIVP), 552-583 (NLRTFCNLAIGCHRPRDGMQLLADMKKSQVSP), and 584-618 (NIHIYSTLINAALKKLDYTYLISILKDMRQNSVPV). The interval 672 to 695 (WQEFQNKPVGDQDTTDKAGGLRDG) is disordered. A compositionally biased stretch (basic and acidic residues) spans 685–695 (TTDKAGGLRDG).

It belongs to the PTCD1 family. In terms of assembly, associates with mitochondrial leucine tRNAs. Interacts with ELAC2.

The protein resides in the mitochondrion. It localises to the mitochondrion matrix. Functionally, mitochondrial protein implicated in negative regulation of leucine tRNA levels, as well as negative regulation of mitochondria-encoded proteins and COX activity. Also affects the 3'-processing of mitochondrial tRNAs. In Mus musculus (Mouse), this protein is Pentatricopeptide repeat-containing protein 1, mitochondrial (Ptcd1).